A 569-amino-acid polypeptide reads, in one-letter code: F-box/WD repeat-containing protein 5 (569 aa).

The 47-residue stretch at 3–49 folds into the F-box domain; it reads EGGMPLLPDSLVYQIFLSLGPADVLAAGLVCRQWQAVSRDEFLWREQ. A WD 1 repeat occupies 90-129; that stretch reads EHTDQVLHLSFSHSGYQFASCSKDCTVKIWNNDLTISLLH. Serine 151 carries the post-translational modification Phosphoserine; by PLK4. Positions 308–316 match the D-box motif; the sequence is RRVFDSVLD. 2 WD repeats span residues 470 to 509 and 511 to 551; these read TPND…CLAK and RHED…RVLQ.

Belongs to the FBXW5 family. Part of the SCF (SKP1-CUL1-F-box) E3 ubiquitin-protein ligase complex SCF(FBXW5) composed of CUL1, SKP1, RBX1 and FBXW5. Component of the DCX(FBXW5) E3 ubiquitin ligase complex, at least composed of (CUL4A or CUL4B), DDB1, FBXW5 and RBX1. Interacts with CDC20, EPS8, TSC1, TSC2 and SASS6. Interacts with TNFAIP8L1; TNFAIP8L1 competes with TSC2 to bind FBXW5 increasing TSC2 stability by preventing its ubiquitination. Post-translationally, phosphorylated at Ser-151 by PLK4 during the G1/S transition, leading to inhibit its ability to ubiquitinate SASS6. Ubiquitinated and degraded by the APC/C complex during mitosis and G1 phase.

The protein resides in the cytoplasm. Its pathway is protein modification; protein ubiquitination. In terms of biological role, substrate recognition component of both SCF (SKP1-CUL1-F-box protein) and DCX (DDB1-CUL4-X-box) E3 ubiquitin-protein ligase complexes. Substrate recognition component of the SCF(FBXW5) E3 ubiquitin-protein ligase complex which mediates the ubiquitination and subsequent proteasomal degradation of SASS6 during S phase, leading to prevent centriole reduplication. The SCF(FBXW5) complex also mediates ubiquitination and degradation of actin-regulator EPS8 during G2 phase, leading to the transient degradation of EPS8 and subsequent cell shape changes required to allow mitotic progression. Substrate-specific adapter of the DCX(FBXW5) E3 ubiquitin-protein ligase complex which mediates the polyubiquitination and subsequent degradation of TSC2. May also act as a negative regulator of MAP3K7/TAK1 signaling in the interleukin-1B (IL1B) signaling pathway. The protein is F-box/WD repeat-containing protein 5 (Fbxw5) of Rattus norvegicus (Rat).